Here is a 115-residue protein sequence, read N- to C-terminus: Con-Ins T1B (115 aa).

A signal peptide spans 1–24; sequence MTTSFYFLLMALGLLLYVCQSSFG. Positions 25-29 are excised as a propeptide; that stretch reads NQHTR. Position 34 is a 4-hydroxyproline; partial (Pro34). Disulfide bonds link Cys38-Cys101, Cys50-Cys114, and Cys100-Cys105. Residues 52 to 94 constitute a propeptide, c peptide; that stretch reads RKRNDAGKKRGQASPLWQRGGSLSMLKARAKRNEAFHLQRAHR. A 4-carboxyglutamate modification is found at Glu98. 4-hydroxyproline; partial is present on Pro104. The residue at position 109 (Glu109) is a 4-carboxyglutamate; partial. The residue at position 114 (Cys114) is a Cysteine amide.

It belongs to the insulin family. As to quaternary structure, heterodimer of A and B chains; disulfide-linked. As to expression, expressed by the venom gland.

The protein localises to the secreted. Functionally, this venom insulin, from a fish-hunting cone snail, facilitates prey capture by rapidly inducing hypoglycemic shock. It is one of the smallest known insulin found in nature and lacks the C-terminal segment of the B chain that, in human insulin, mediates engagement of the insulin receptor (INSR) and assembly of the hormone's hexameric storage form. Despite lacking this segment, it both binds and activates human insulin receptor (long isoform (HIR-B) of INSR) with a high potency (EC(50)=12.0 nM). In vivo, intraperitoneal injection of this peptide into zebrafish lowers blood glucose with a lower potency than human insulin. In addition, when applied to water, this peptide reduces overall locomotor activity of zebrafish larvae, observed as a significant decrease in the percentage of time spent swimming and movement frequency. When tested on a mouse model of diabetes, this insulin also lowers blood glucose with a 10-fold lower potency than human insulin. This Conus tulipa (Fish-hunting cone snail) protein is Con-Ins T1B.